The primary structure comprises 392 residues: MNARSTGQHPARYPGAAAGEPTLDSWQEAPHNRWAFARLGELLPTAAVSRRDPATPAEPVVRLDALATRLPDLEQRLEETCTDAFLVLRGSEVLAEYYRAGFAPDDRHLLMSVSKSLCGTVVGALIDEGRIDPAQPVTEYVPELAGSVYDGPSVLQVLDMQISIDYNEDYVDPASEVQTHDRSAGWRTRRDGDPADTYEFLTTLRGDGGTGEFQYCSANTDVLAWIVERVTGLRYVEALSTYLWAKLDADRDATITVDQTGFGFANGGVSCTARDLARVGRMMLDGGVAPGGRVVSQGWVESVLAGGSREAMTDEGFTSAFPEGSYTRQWWCTGNERGNVSGIGIHGQNLWLDPRTDSVIVKLSSWPDPDTRHWHGLQSGILLDVSRALDAV.

The interval 1 to 22 is disordered; the sequence is MNARSTGQHPARYPGAAAGEPT. Serine 112 is a catalytic residue.

The catalysed reaction is [N-(6-aminohexanoyl)](n) + H2O = [N-(6-aminohexanoyl)](n-1) + 6-aminohexanoate. The enzyme catalyses N-(6-aminohexanoyl)-6-aminohexanoate + H2O = 2 6-aminohexanoate. It functions in the pathway xenobiotic degradation; nylon-6 oligomer degradation. Involved in nylon oligomer degradation. This chain is 6-aminohexanoate-dimer hydrolase, found in Paenarthrobacter ureafaciens.